The chain runs to 100 residues: Large ribosomal subunit protein uL23 (100 aa).

Belongs to the universal ribosomal protein uL23 family. In terms of assembly, part of the 50S ribosomal subunit. Contacts protein L29, and trigger factor when it is bound to the ribosome.

In terms of biological role, one of the early assembly proteins it binds 23S rRNA. One of the proteins that surrounds the polypeptide exit tunnel on the outside of the ribosome. Forms the main docking site for trigger factor binding to the ribosome. This Aliivibrio fischeri (strain MJ11) (Vibrio fischeri) protein is Large ribosomal subunit protein uL23.